The chain runs to 358 residues: Isopentenyl-diphosphate delta-isomerase (358 aa).

12-13 provides a ligand contact to substrate; that stretch reads RK. Residues 69 to 71, Ser99, and Asn128 each bind FMN; that span reads AMT. A substrate-binding site is contributed by Gln158. Glu159 is a Mg(2+) binding site. FMN is bound by residues Lys190, Thr220, 267–269, and 288–289; these read GIR and AG.

It belongs to the IPP isomerase type 2 family. As to quaternary structure, homooctamer. Dimer of tetramers. It depends on FMN as a cofactor. NADPH serves as cofactor. Mg(2+) is required as a cofactor.

Its subcellular location is the cytoplasm. It catalyses the reaction isopentenyl diphosphate = dimethylallyl diphosphate. Involved in the biosynthesis of isoprenoids. Catalyzes the 1,3-allylic rearrangement of the homoallylic substrate isopentenyl (IPP) to its allylic isomer, dimethylallyl diphosphate (DMAPP). The polypeptide is Isopentenyl-diphosphate delta-isomerase (Listeria monocytogenes serotype 4b (strain F2365)).